The following is a 732-amino-acid chain: Polyribonucleotide nucleotidyltransferase (732 aa).

Asp-502 and Asp-508 together coordinate Mg(2+). The region spanning 569–628 (PRLTSIQIPVDAIGMVIGKGGETIRSITEETGAEINIDDDGTVTIACSSPEGTKAAVETI) is the KH domain. The S1 motif domain occupies 638–712 (GTIYMGKVRD…GKTKFALSIK (75 aa)).

This sequence belongs to the polyribonucleotide nucleotidyltransferase family. Mg(2+) is required as a cofactor.

It localises to the cytoplasm. The enzyme catalyses RNA(n+1) + phosphate = RNA(n) + a ribonucleoside 5'-diphosphate. Functionally, involved in mRNA degradation. Catalyzes the phosphorolysis of single-stranded polyribonucleotides processively in the 3'- to 5'-direction. This chain is Polyribonucleotide nucleotidyltransferase, found in Chlorobaculum parvum (strain DSM 263 / NCIMB 8327) (Chlorobium vibrioforme subsp. thiosulfatophilum).